The primary structure comprises 481 residues: Neuronal acetylcholine receptor subunit eat-2 (481 aa).

The first 19 residues, 1 to 19, serve as a signal peptide directing secretion; sequence MFLLLQILYILLFLNLADT. The Extracellular portion of the chain corresponds to 20–235; the sequence is SDDEYRLLKD…MHLKRRTMYY (216 aa). The N-linked (GlcNAc...) asparagine glycan is linked to Asn93. A disulfide bridge connects residues Cys147 and Cys161. A run of 3 helical transmembrane segments spans residues 236-256, 264-284, and 292-312; these read GLNW…GFTM, VTLQ…VSEV, and IPII…SICV. Over 313–443 the chain is Cytoplasmic; that stretch reads SLITVNIFYR…WRFMAMVIDR (131 aa). The segment at 356–384 is disordered; that stretch reads KPKREKKKEEEEDEESNAGGKEEESELIS. A helical membrane pass occupies residues 444–464; the sequence is ASLFLFTGLIFGTTFVIFAAC.

This sequence belongs to the ligand-gated ion channel (TC 1.A.9) family. Acetylcholine receptor (TC 1.A.9.1) subfamily. Neuronal AChR seems to be composed of two different type of subunits: alpha and beta.

The protein localises to the postsynaptic cell membrane. The protein resides in the cell membrane. After binding acetylcholine, the AChR responds by an extensive change in conformation that affects all subunits and leads to opening of an ion-conducting channel across the plasma membrane. Nicotinic acetylcholine receptor in the MC pharyngeal motor neuron involved in pharyngeal pumping. Has a role in the determination of life span possibly via calorific restriction which affects growth rate, although this is independent of metabolic activity. The sequence is that of Neuronal acetylcholine receptor subunit eat-2 from Caenorhabditis briggsae.